A 273-amino-acid polypeptide reads, in one-letter code: Glutamate racemase (273 aa).

Residues D11–S12 and Y43–G44 each bind substrate. The active-site Proton donor/acceptor is the C74. N75 to T76 lines the substrate pocket. The active-site Proton donor/acceptor is the C185. T186–H187 provides a ligand contact to substrate.

The protein belongs to the aspartate/glutamate racemases family.

The enzyme catalyses L-glutamate = D-glutamate. Its pathway is cell wall biogenesis; peptidoglycan biosynthesis. Its function is as follows. Provides the (R)-glutamate required for cell wall biosynthesis. This Lactiplantibacillus plantarum (strain ATCC BAA-793 / NCIMB 8826 / WCFS1) (Lactobacillus plantarum) protein is Glutamate racemase.